A 229-amino-acid chain; its full sequence is Large ribosomal subunit protein uL1 (229 aa).

Belongs to the universal ribosomal protein uL1 family. Part of the 50S ribosomal subunit.

Its function is as follows. Binds directly to 23S rRNA. The L1 stalk is quite mobile in the ribosome, and is involved in E site tRNA release. Functionally, protein L1 is also a translational repressor protein, it controls the translation of the L11 operon by binding to its mRNA. In Magnetococcus marinus (strain ATCC BAA-1437 / JCM 17883 / MC-1), this protein is Large ribosomal subunit protein uL1.